We begin with the raw amino-acid sequence, 101 residues long: uncharacterized protein (101 aa).

A signal peptide spans 1–25; it reads MRKKRLLSRISFSSLFLLCGTLLSA. C26 carries the N-palmitoyl cysteine lipid modification. A lipid anchor (S-diacylglycerol cysteine) is attached at C26.

This sequence belongs to the MG439/MG440 family.

Its subcellular location is the cell membrane. This is an uncharacterized protein from Mycoplasma pneumoniae (strain ATCC 29342 / M129 / Subtype 1) (Mycoplasmoides pneumoniae).